Consider the following 244-residue polypeptide: MELKEYLDYLVEFIKETVKKANAKGVVIGISGGIDSAVVACLAKKAFPNDYTAVWMPIESSDEDYKCKQELIDQCGIKAIDVELKETFLSFKKAIKDSTTPEHKLAIANAKARLRMTTLYTVAQTNSYLVLGTDNLDEWHIGYFTKFGDGGVDMVPLVHLLKREVREAARILGVPTSIINRAPTASLWEDQTDESELGITYDQIDAYLAGEINDENVKSRVDHLHKISEHKRNGAVAPKEFKRK.

29-36 (GISGGIDS) serves as a coordination point for ATP. Residue Asp-35 participates in Mg(2+) binding. Arg-113 provides a ligand contact to deamido-NAD(+). Thr-133 contacts ATP. Residue Glu-138 participates in Mg(2+) binding. Deamido-NAD(+) is bound by residues Lys-146 and Asp-153. ATP-binding residues include Lys-162 and Thr-184. Deamido-NAD(+) is bound at residue 230-231 (HK).

It belongs to the NAD synthetase family. In terms of assembly, homodimer.

It carries out the reaction deamido-NAD(+) + NH4(+) + ATP = AMP + diphosphate + NAD(+) + H(+). The protein operates within cofactor biosynthesis; NAD(+) biosynthesis; NAD(+) from deamido-NAD(+) (ammonia route): step 1/1. In terms of biological role, catalyzes the ATP-dependent amidation of deamido-NAD to form NAD. Uses ammonia as a nitrogen source. The sequence is that of NH(3)-dependent NAD(+) synthetase from Mesoplasma florum (strain ATCC 33453 / NBRC 100688 / NCTC 11704 / L1) (Acholeplasma florum).